The sequence spans 880 residues: DNA double-strand break repair Rad50 ATPase (880 aa).

ATP-binding positions include R12, 32–38, and Q138; that span reads NGSGKSS. Coiled coils occupy residues 225–336 and 391–744; these read GELE…VIKE and GEVI…QALN. Residues 397–494 form the Zinc-hook domain; sequence LESLEKERTE…NLRKLEIKLR (98 aa). Positions 442 and 445 each coordinate Zn(2+). 789–794 contacts ATP; that stretch reads FLSGGE.

This sequence belongs to the SMC family. RAD50 subfamily. As to quaternary structure, homodimer. Forms a heterotetramer composed of two Mre11 subunits and two Rad50 subunits. Zn(2+) is required as a cofactor.

Part of the Rad50/Mre11 complex, which is involved in the early steps of DNA double-strand break (DSB) repair. The complex may facilitate opening of the processed DNA ends to aid in the recruitment of HerA and NurA. Rad50 controls the balance between DNA end bridging and DNA resection via ATP-dependent structural rearrangements of the Rad50/Mre11 complex. This Pyrococcus abyssi (strain GE5 / Orsay) protein is DNA double-strand break repair Rad50 ATPase.